We begin with the raw amino-acid sequence, 412 residues long: Multifunctional CCA protein (412 aa).

Residues Gly8 and Arg11 each coordinate ATP. CTP is bound by residues Gly8 and Arg11. Residues Glu21 and Asp23 each contribute to the Mg(2+) site. ATP is bound by residues Arg91, Arg137, and Arg140. Arg91, Arg137, and Arg140 together coordinate CTP. An HD domain is found at 228 to 329; that stretch reads TGIHTLMTLA…LKLFNAIDVW (102 aa).

This sequence belongs to the tRNA nucleotidyltransferase/poly(A) polymerase family. Bacterial CCA-adding enzyme type 1 subfamily. As to quaternary structure, monomer. Can also form homodimers and oligomers. Requires Mg(2+) as cofactor. Ni(2+) is required as a cofactor.

It carries out the reaction a tRNA precursor + 2 CTP + ATP = a tRNA with a 3' CCA end + 3 diphosphate. The catalysed reaction is a tRNA with a 3' CCA end + 2 CTP + ATP = a tRNA with a 3' CCACCA end + 3 diphosphate. Its function is as follows. Catalyzes the addition and repair of the essential 3'-terminal CCA sequence in tRNAs without using a nucleic acid template. Adds these three nucleotides in the order of C, C, and A to the tRNA nucleotide-73, using CTP and ATP as substrates and producing inorganic pyrophosphate. tRNA 3'-terminal CCA addition is required both for tRNA processing and repair. Also involved in tRNA surveillance by mediating tandem CCA addition to generate a CCACCA at the 3' terminus of unstable tRNAs. While stable tRNAs receive only 3'-terminal CCA, unstable tRNAs are marked with CCACCA and rapidly degraded. This is Multifunctional CCA protein from Yersinia pseudotuberculosis serotype I (strain IP32953).